The sequence spans 370 residues: DNA replication and repair protein RecF (370 aa).

30–37 (GQNGMGKT) lines the ATP pocket.

Belongs to the RecF family.

It is found in the cytoplasm. Functionally, the RecF protein is involved in DNA metabolism; it is required for DNA replication and normal SOS inducibility. RecF binds preferentially to single-stranded, linear DNA. It also seems to bind ATP. The chain is DNA replication and repair protein RecF from Bacteroides fragilis (strain YCH46).